The sequence spans 725 residues: Catalase-peroxidase (725 aa).

The tryptophyl-tyrosyl-methioninium (Trp-Tyr) (with M-253) cross-link spans 99–227; it reads WHAAGTYRIA…LAAVMMGLIY (129 aa). Catalysis depends on His-100, which acts as the Proton acceptor. A cross-link (tryptophyl-tyrosyl-methioninium (Tyr-Met) (with W-99)) is located at residues 227-253; that stretch reads YVNPEGVDGNPDPLKTAHDIRITFSRM. His-268 provides a ligand contact to heme b.

The protein belongs to the peroxidase family. Peroxidase/catalase subfamily. Homodimer or homotetramer. It depends on heme b as a cofactor. Formation of the three residue Trp-Tyr-Met cross-link is important for the catalase, but not the peroxidase activity of the enzyme.

It carries out the reaction H2O2 + AH2 = A + 2 H2O. The catalysed reaction is 2 H2O2 = O2 + 2 H2O. Bifunctional enzyme with both catalase and broad-spectrum peroxidase activity. The polypeptide is Catalase-peroxidase (Picosynechococcus sp. (strain ATCC 27264 / PCC 7002 / PR-6) (Agmenellum quadruplicatum)).